We begin with the raw amino-acid sequence, 2383 residues long: Reducing polyketide synthase rdc5 (2383 aa).

The Ketosynthase family 3 (KS3) domain occupies 10–438; sequence RAPIAIIGMS…GTNAHLVLER (429 aa). Catalysis depends on for beta-ketoacyl synthase activity residues Cys186, His321, and His361. The malonyl-CoA:ACP transacylase (MAT) domain stretch occupies residues 550-881; the sequence is FVFTGQGAQW…GFAAELFRRG (332 aa). The N-terminal hotdog fold stretch occupies residues 930–1066; sequence KSLIGAERPS…GLFSINYEDS (137 aa). The region spanning 930–1253 is the PKS/mFAS DH domain; sequence KSLIGAERPS…LAELEVEDAD (324 aa). Positions 932 to 1250 are dehydratase (DH) domain; sequence LIGAERPSLD…DFHLAELEVE (319 aa). His962 (proton acceptor; for dehydratase activity) is an active-site residue. A C-terminal hotdog fold region spans residues 1094–1253; the sequence is VEVISKQAFY…LAELEVEDAD (160 aa). Asp1160 serves as the catalytic Proton donor; for dehydratase activity. Residues 1663–1977 form an enoyl reductase (ER) domain region; it reads GLLNTLHFVS…QGKHVGKMIL (315 aa). Catalysis depends on Cys1776, which acts as the Phosphocysteine intermediate. Residues 2002–2182 form a ketoreductase (KR) domain region; it reads ATYLFIGGLG…VSVNLGIMRD (181 aa). Residues 2300 to 2377 form the Carrier domain; that stretch reads AAGPIITKAL…QFAVQIAKKS (78 aa). Ser2337 carries the post-translational modification O-(pantetheine 4'-phosphoryl)serine.

It participates in secondary metabolite biosynthesis. Functionally, reducing polyketide synthase; part of the gene cluster that mediates the biosynthesis of radicicol, a resorcylic acid lactone (RAL) that irreversibly inhibits the HSP90 molecular chaperone, an important target for cancer chemotherapy. The radicicol cluster encodes only two apparent post-PKS enzymes, a cytochrome P450 monooxygenase (rdc4) and a non-heme halogenase (rdc2) that could introduce the epoxide and the chlorine, respectively. If this cluster includes all the genes required for radicicol biosynthesis, the remaining structural features of radicicol are presumably generated by the PKSs rdc1 and rdc5. The C-2' ketone could arise if the R-PKS rdc5 and NR-PKS rdc1 each carry out four iterations, in contrast to the five iteration-three iteration split for the hypothemycin PKSs. The origin of the cis 5',6' double bond is not known. The radicicol R-PKS rdc5 ER domain may catalyze either double bond isomerization or reduction in the third iteration. In Metacordyceps chlamydosporia (Nematophagous fungus), this protein is Reducing polyketide synthase rdc5.